The chain runs to 121 residues: MKEIIAIIRPSKMAQTKTVLEGLGFPAMTANRVLGRGKQKAIVGELGFEVDNKELLNQPGDMRYIPKTMLTLIVPDEDASLVVEAIMKVNKSGQYGDGKIFVCPIEDIITVRTSERGEAAI.

This sequence belongs to the P(II) protein family.

In terms of biological role, could be involved in the regulation of nitrogen fixation. This Methanococcus maripaludis (Methanococcus deltae) protein is Nitrogen fixation nifHD region glnB-like protein 2 (glnBII).